The primary structure comprises 369 residues: NSFL1 cofactor p47 (369 aa).

Disordered regions lie at residues 46–115 and 133–156; these read DEDI…KSPN and VDRTAKSSGESSKPKPFAGGGYRL. A compositionally biased stretch (basic and acidic residues) spans 67–81; the sequence is SDHRVTSFRDLVHAQ. Residues 109–115 carry the Nuclear localization signal motif; that stretch reads PRKKSPN. Residues 172 to 175 carry the Nuclear localization signal motif; that stretch reads RHNS. The SEP domain maps to 178 to 243; it reads DVHVVLKLWK…MEDHRDEEYV (66 aa). Positions 260–277 are enriched in polar residues; sequence GSTAPQVLSTSSPAQQAE. A disordered region spans residues 260–280; the sequence is GSTAPQVLSTSSPAQQAENEA. Positions 291–367 constitute a UBX domain; the sequence is SEPVTNIQIR…NLLNAVIVQR (77 aa).

It belongs to the NSFL1C family.

The protein localises to the nucleus. It localises to the golgi apparatus. The protein resides in the golgi stack. It is found in the cytoplasm. Its subcellular location is the cytoskeleton. The protein localises to the microtubule organizing center. It localises to the centrosome. Functionally, reduces the ATPase activity of VCP. Necessary for the fragmentation of Golgi stacks during mitosis and for VCP-mediated reassembly of Golgi stacks after mitosis. May play a role in VCP-mediated formation of transitional endoplasmic reticulum (tER). Inhibits the activity of CTSL (in vitro). Together with UBXN2B/p37, regulates the centrosomal levels of kinase AURKA/Aurora A levels during mitotic progression by promoting AURKA removal from centrosomes in prophase. Also, regulates spindle orientation during mitosis. The chain is NSFL1 cofactor p47 (NSFL1C) from Gallus gallus (Chicken).